Consider the following 621-residue polypeptide: 1-deoxy-D-xylulose-5-phosphate synthase (621 aa).

Residues His-80 and 121-123 each bind thiamine diphosphate; that span reads GHS. Asp-152 provides a ligand contact to Mg(2+). Thiamine diphosphate contacts are provided by residues 153 to 154, Asn-181, Tyr-288, and Glu-370; that span reads GA. Asn-181 contacts Mg(2+).

This sequence belongs to the transketolase family. DXPS subfamily. As to quaternary structure, homodimer. Mg(2+) is required as a cofactor. The cofactor is thiamine diphosphate.

It carries out the reaction D-glyceraldehyde 3-phosphate + pyruvate + H(+) = 1-deoxy-D-xylulose 5-phosphate + CO2. Its pathway is metabolic intermediate biosynthesis; 1-deoxy-D-xylulose 5-phosphate biosynthesis; 1-deoxy-D-xylulose 5-phosphate from D-glyceraldehyde 3-phosphate and pyruvate: step 1/1. Catalyzes the acyloin condensation reaction between C atoms 2 and 3 of pyruvate and glyceraldehyde 3-phosphate to yield 1-deoxy-D-xylulose-5-phosphate (DXP). The polypeptide is 1-deoxy-D-xylulose-5-phosphate synthase (Shewanella frigidimarina (strain NCIMB 400)).